Consider the following 139-residue polypeptide: ATP synthase epsilon chain (139 aa).

Belongs to the ATPase epsilon chain family. F-type ATPases have 2 components, CF(1) - the catalytic core - and CF(0) - the membrane proton channel. CF(1) has five subunits: alpha(3), beta(3), gamma(1), delta(1), epsilon(1). CF(0) has three main subunits: a, b and c.

It is found in the cell inner membrane. Functionally, produces ATP from ADP in the presence of a proton gradient across the membrane. In Pseudomonas putida (strain GB-1), this protein is ATP synthase epsilon chain.